Here is a 365-residue protein sequence, read N- to C-terminus: Phospho-N-acetylmuramoyl-pentapeptide-transferase (365 aa).

The next 11 helical transmembrane spans lie at 15–35 (WPAA…DRLI), 39–59 (LLSL…WWGV), 84–104 (GTPT…GGLV), 114–134 (LLAI…DDWS), 156–176 (AAVL…TVSL), 178–198 (FNLD…VFLA), 209–229 (LDGL…LQLM), 235–255 (GDPA…GFLI), 263–283 (VFMG…VALL), 291–311 (LLMG…VWVF), and 343–363 (VVVP…LGLH).

This sequence belongs to the glycosyltransferase 4 family. MraY subfamily. Mg(2+) is required as a cofactor.

It is found in the cell inner membrane. It catalyses the reaction UDP-N-acetyl-alpha-D-muramoyl-L-alanyl-gamma-D-glutamyl-meso-2,6-diaminopimeloyl-D-alanyl-D-alanine + di-trans,octa-cis-undecaprenyl phosphate = di-trans,octa-cis-undecaprenyl diphospho-N-acetyl-alpha-D-muramoyl-L-alanyl-D-glutamyl-meso-2,6-diaminopimeloyl-D-alanyl-D-alanine + UMP. The protein operates within cell wall biogenesis; peptidoglycan biosynthesis. Its function is as follows. Catalyzes the initial step of the lipid cycle reactions in the biosynthesis of the cell wall peptidoglycan: transfers peptidoglycan precursor phospho-MurNAc-pentapeptide from UDP-MurNAc-pentapeptide onto the lipid carrier undecaprenyl phosphate, yielding undecaprenyl-pyrophosphoryl-MurNAc-pentapeptide, known as lipid I. The chain is Phospho-N-acetylmuramoyl-pentapeptide-transferase from Synechococcus sp. (strain WH7803).